The chain runs to 510 residues: MSKKPVALIILDGFALRDEDKGNAVTHAKKPNFDRFWNEYPHATLQASGEAVGLPEGQMGNSEVGHLNIGAGRIVYQSLTRVNVAIREGEFEQNETLLAAVKHAKEKGTNLHLFGLLSDGGVHSHIEHLYALLRLAKSEGLEKVYIHGFLDGRDVAPQSAETYLKELNEKIEEYGVGEIATLSGRYYSMDRDKRWERVEKSYRAMVYGEGPSYTSAEECVKDSYENGIYDEFVLPSVITKEDGSPVATIQDEDAVIFYNFRPDRAIQISNTFANEDFRSFDRGEKHPKNLHFVCLTHFSETVDGYVAFKPNNLDNTLGEVLSQNNLKQLRIAETEKYPHVTFFMSGGREAEFPGETRILIDSPKVATYDLKPEMSAYEVTDALLAEIEGDKQDAILLNFANPDMVGHSGMLEPTVKAIETVDECLGKIVDAILAKGGTAIITADHGNADEVITLEGNPMTAHTTNPVPVIVTKQGLELREDGILGDLAPTMLTLLDVAQPKEMTGKTLIK.

Mn(2+) is bound by residues aspartate 12 and serine 62. Serine 62 acts as the Phosphoserine intermediate in catalysis. Residues histidine 123, 153–154 (RD), arginine 185, arginine 191, 261–264 (RPDR), and lysine 336 contribute to the substrate site. Mn(2+)-binding residues include aspartate 403, histidine 407, aspartate 444, histidine 445, and histidine 462.

Belongs to the BPG-independent phosphoglycerate mutase family. In terms of assembly, monomer. It depends on Mn(2+) as a cofactor.

The catalysed reaction is (2R)-2-phosphoglycerate = (2R)-3-phosphoglycerate. The protein operates within carbohydrate degradation; glycolysis; pyruvate from D-glyceraldehyde 3-phosphate: step 3/5. Essential for rapid growth and for sporulation. Catalyzes the interconversion of 2-phosphoglycerate and 3-phosphoglycerate. This chain is 2,3-bisphosphoglycerate-independent phosphoglycerate mutase, found in Priestia megaterium (strain DSM 319 / IMG 1521) (Bacillus megaterium).